We begin with the raw amino-acid sequence, 331 residues long: Glyceraldehyde-3-phosphate dehydrogenase 3 (331 aa).

NAD(+)-binding positions include 11-12 (RI), D33, and E77. Position 148 is a phosphoserine (S148). 148 to 150 (SCT) contacts D-glyceraldehyde 3-phosphate. Catalysis depends on C149, which acts as the Nucleophile. Position 177 is a phosphoserine (S177). T179 serves as a coordination point for D-glyceraldehyde 3-phosphate. Position 200 is a phosphoserine (S200). D-glyceraldehyde 3-phosphate-binding positions include 208–209 (TG) and R231. NAD(+) is bound at residue N313.

This sequence belongs to the glyceraldehyde-3-phosphate dehydrogenase family. In terms of assembly, homotetramer.

It localises to the cytoplasm. It carries out the reaction D-glyceraldehyde 3-phosphate + phosphate + NAD(+) = (2R)-3-phospho-glyceroyl phosphate + NADH + H(+). It functions in the pathway carbohydrate degradation; glycolysis; pyruvate from D-glyceraldehyde 3-phosphate: step 1/5. This is Glyceraldehyde-3-phosphate dehydrogenase 3 from Kluyveromyces marxianus (Yeast).